The primary structure comprises 101 residues: Small ribosomal subunit protein uS14 (101 aa).

The tract at residues 1-22 (MAKVSSIKKNESRKKKSQSLHN) is disordered. The span at 11 to 22 (ESRKKKSQSLHN) shows a compositional bias: basic residues.

It belongs to the universal ribosomal protein uS14 family. As to quaternary structure, part of the 30S ribosomal subunit. Contacts proteins S3 and S10.

Binds 16S rRNA, required for the assembly of 30S particles and may also be responsible for determining the conformation of the 16S rRNA at the A site. The sequence is that of Small ribosomal subunit protein uS14 from Rickettsia conorii (strain ATCC VR-613 / Malish 7).